Reading from the N-terminus, the 330-residue chain is 7,8-didemethyl-8-hydroxy-5-deazariboflavin synthase (330 aa).

The Radical SAM core domain maps to Val-5–Asn-245. 3 residues coordinate [4Fe-4S] cluster: Cys-19, Cys-23, and Cys-26.

Belongs to the radical SAM superfamily. CofG family. As to quaternary structure, consists of two subunits, CofG and CofH. [4Fe-4S] cluster serves as cofactor.

It carries out the reaction 5-amino-5-(4-hydroxybenzyl)-6-(D-ribitylimino)-5,6-dihydrouracil + S-adenosyl-L-methionine = 7,8-didemethyl-8-hydroxy-5-deazariboflavin + 5'-deoxyadenosine + L-methionine + NH4(+) + H(+). Its pathway is cofactor biosynthesis; coenzyme F0 biosynthesis. Functionally, catalyzes the radical-mediated synthesis of 7,8-didemethyl-8-hydroxy-5-deazariboflavin from 5-amino-5-(4-hydroxybenzyl)-6-(D-ribitylimino)-5,6-dihydrouracil. The polypeptide is 7,8-didemethyl-8-hydroxy-5-deazariboflavin synthase (Methanococcoides burtonii (strain DSM 6242 / NBRC 107633 / OCM 468 / ACE-M)).